Consider the following 215-residue polypeptide: Pyrrolidone-carboxylate peptidase (215 aa).

Residues glutamate 80, cysteine 143, and histidine 167 contribute to the active site.

The protein belongs to the peptidase C15 family. As to quaternary structure, homotetramer.

The protein resides in the cytoplasm. It catalyses the reaction Release of an N-terminal pyroglutamyl group from a polypeptide, the second amino acid generally not being Pro.. Its function is as follows. Removes 5-oxoproline from various penultimate amino acid residues except L-proline. The polypeptide is Pyrrolidone-carboxylate peptidase (Bacillus cereus (strain AH820)).